The primary structure comprises 95 residues: Integration host factor subunit beta (95 aa).

Belongs to the bacterial histone-like protein family. In terms of assembly, heterodimer of an alpha and a beta chain.

Its function is as follows. This protein is one of the two subunits of integration host factor, a specific DNA-binding protein that functions in genetic recombination as well as in transcriptional and translational control. This chain is Integration host factor subunit beta, found in Ruegeria sp. (strain TM1040) (Silicibacter sp.).